Here is a 151-residue protein sequence, read N- to C-terminus: Chemokine-like factor (151 aa).

Positions 13–133 (FCLSLKCFVK…DCALMCQKLR (121 aa)) constitute an MARVEL domain. 4 helical membrane passes run 19 to 39 (CFVK…FIVA), 45 to 65 (YIVI…LYMC), 74 to 94 (FFWP…MLIV), and 107 to 127 (IMVG…DCAL). Asn142 carries an N-linked (GlcNAc...) asparagine glycan.

It belongs to the chemokine-like factor family. Both isoforms have highest expression levels in testis with relatively lower expression level in liver, spleen, lung, brain and heart and barely detectable levels in skeletal muscle and kidney were barely detected. In most tissues, isoform CKLF2 has higher expression levels than isoform CKLF1.

The protein resides in the secreted. It localises to the membrane. May play an important role in inflammation and regeneration of skeletal muscle. Essential for embryonic development. In terms of biological role, has chemotactic response in monocytes, neutrophils and lymphocytes. Binds CCR4. This Rattus norvegicus (Rat) protein is Chemokine-like factor (Cklf).